The chain runs to 172 residues: C-phycocyanin beta chain (172 aa).

Residues Asn35, Asp39, Asn72, Arg77, Cys82, 82–88 (CLRDMEI), 149–151 (TTG), and Cys153 contribute to the (2R,3E)-phycocyanobilin site. The residue at position 72 (Asn72) is an N4-methylasparagine.

This sequence belongs to the phycobiliprotein family. Heterodimer of an alpha and a beta subunit. Dimers further assemble into trimers and the trimers into hexamers. The basic functional unit of phycobiliproteins is a ring-shaped hexamer formed from two back-to-back trimers contacting via the alpha chain subunits. The trimers are composed of alpha/beta subunit heterodimers arranged around a three-fold axis of symmetry. The phycoerythrins also contain a gamma subunit which is located in the center of the hexamer. Contains two covalently linked phycocyanobilin chromophores.

It is found in the plastid. Its subcellular location is the chloroplast thylakoid membrane. In terms of biological role, light-harvesting photosynthetic tetrapyrrole chromophore-protein from the phycobiliprotein complex (phycobilisome, PBS). Phycocyanin is the major phycobiliprotein in the PBS rod. This chain is C-phycocyanin beta chain (cpcB), found in Galdieria sulphuraria (Red alga).